The following is a 564-amino-acid chain: NAD-dependent malic enzyme (564 aa).

Catalysis depends on tyrosine 104, which acts as the Proton donor. Residue arginine 157 coordinates NAD(+). The active-site Proton acceptor is lysine 175. The a divalent metal cation site is built by glutamate 246, aspartate 247, and aspartate 270. NAD(+)-binding residues include aspartate 270 and asparagine 417.

This sequence belongs to the malic enzymes family. Homotetramer. It depends on Mg(2+) as a cofactor. Mn(2+) is required as a cofactor.

The catalysed reaction is (S)-malate + NAD(+) = pyruvate + CO2 + NADH. It carries out the reaction oxaloacetate + H(+) = pyruvate + CO2. The sequence is that of NAD-dependent malic enzyme from Aeromonas hydrophila subsp. hydrophila (strain ATCC 7966 / DSM 30187 / BCRC 13018 / CCUG 14551 / JCM 1027 / KCTC 2358 / NCIMB 9240 / NCTC 8049).